Reading from the N-terminus, the 116-residue chain is Nucleoid-associated protein P9515_00191 (116 aa).

A compositionally biased stretch (basic and acidic residues) spans 89-98 (STTTMKERMN). Positions 89-116 (STTTMKERMNDLTGGLNLNLPGLDNNDS) are disordered. Over residues 99-116 (DLTGGLNLNLPGLDNNDS) the composition is skewed to low complexity.

It belongs to the YbaB/EbfC family. Homodimer.

The protein localises to the cytoplasm. It localises to the nucleoid. Its function is as follows. Binds to DNA and alters its conformation. May be involved in regulation of gene expression, nucleoid organization and DNA protection. The chain is Nucleoid-associated protein P9515_00191 from Prochlorococcus marinus (strain MIT 9515).